A 245-amino-acid polypeptide reads, in one-letter code: MYPVDLHMHTVASTHAYSTLHDYIVEAQQKNIRLFAITDHGPDMADAPHYWHFMNMRVWPRLVDGVGILRGIEANIKNIEGDIDCTGPMLDQVDVIIAGFHEPVFPPQDKDTHTAAMIATMARGDAHIISHPGNPKFPVDIRAIAEAAAKYNVALELNNSSFIHSRQGSEPNCRAIAEAVRDAGGLLSLGSDSHIAFSLGDFTHCERILQEVNFPQDRILNVSPRRVLDFLEQRGMPAIAELADL.

Zn(2+) contacts are provided by histidine 7, histidine 9, histidine 15, histidine 40, glutamate 73, histidine 101, histidine 131, aspartate 192, and histidine 194.

It belongs to the PHP family. As to quaternary structure, homotrimer. The cofactor is Zn(2+).

This Pectobacterium atrosepticum (strain SCRI 1043 / ATCC BAA-672) (Erwinia carotovora subsp. atroseptica) protein is Probable phosphatase ECA2529.